The primary structure comprises 357 residues: 3-dehydroquinate synthase (357 aa).

Residues 69–74 (DGEKNK), 103–107 (GVIGD), 127–128 (TT), Lys-140, and Lys-149 contribute to the NAD(+) site. Residues Glu-182, His-245, and His-262 each coordinate Zn(2+).

It belongs to the sugar phosphate cyclases superfamily. Dehydroquinate synthase family. The cofactor is Co(2+). Requires Zn(2+) as cofactor. It depends on NAD(+) as a cofactor.

The protein localises to the cytoplasm. The catalysed reaction is 7-phospho-2-dehydro-3-deoxy-D-arabino-heptonate = 3-dehydroquinate + phosphate. It participates in metabolic intermediate biosynthesis; chorismate biosynthesis; chorismate from D-erythrose 4-phosphate and phosphoenolpyruvate: step 2/7. Catalyzes the conversion of 3-deoxy-D-arabino-heptulosonate 7-phosphate (DAHP) to dehydroquinate (DHQ). This is 3-dehydroquinate synthase from Shewanella denitrificans (strain OS217 / ATCC BAA-1090 / DSM 15013).